Consider the following 240-residue polypeptide: Putative exosome complex component RRP41 (240 aa).

Belongs to the RNase PH family. In terms of assembly, component of the RNA exosome complex.

It is found in the cytoplasm. Its subcellular location is the nucleus. The protein localises to the nucleolus. The protein resides in the nucleoplasm. Functionally, non-catalytic component of the RNA exosome complex which has 3'-&gt;5' exoribonuclease activity and participates in a multitude of cellular RNA processing and degradation events. The sequence is that of Putative exosome complex component RRP41 (exos-4.1) from Caenorhabditis briggsae.